The following is a 658-amino-acid chain: Integrator complex subunit 9 (658 aa).

1D-myo-inositol hexakisphosphate contacts are provided by lysine 2 and phenylalanine 19. A Glycyl lysine isopeptide (Lys-Gly) (interchain with G-Cter in SUMO2) cross-link involves residue lysine 58. 2 residues coordinate 1D-myo-inositol hexakisphosphate: lysine 510 and arginine 511. Residues 548–574 are disordered; that stretch reads DNKHLLQPPPRPAQPTSGKKRKRVSDD. A Nuclear localization signal motif is present at residues 566 to 570; the sequence is KKRKR.

The protein belongs to the metallo-beta-lactamase superfamily. RNA-metabolizing metallo-beta-lactamase-like family. INTS9 subfamily. As to quaternary structure, component of the Integrator complex, composed of core subunits INTS1, INTS2, INTS3, INTS4, INTS5, INTS6, INTS7, INTS8, INTS9/RC74, INTS10, INTS11/CPSF3L, INTS12, INTS13, INTS14 and INTS15. The core complex associates with protein phosphatase 2A subunits PPP2CA and PPP2R1A, to form the Integrator-PP2A (INTAC) complex. INTS9 is part of the RNA endonuclease subcomplex, composed of INTS4, INTS9, INTS11 and inositol hexakisphosphate (InsP6). Interacts with WDR73; interaction is required for the assembly of the RNA endonuclease subcomplex in the cytoplasm. Interacts with BRAT1; interaction is required for the assembly of the RNA endonuclease subcomplex. Interacts with ESRRB, ESRRB is not a core component of the Integrator complex and this association is a bridge for the interaction with the multiprotein complex Integrator; attracts the transcriptional machinery.

It localises to the nucleus. It is found in the cytoplasm. Its function is as follows. Component of the integrator complex, a multiprotein complex that terminates RNA polymerase II (Pol II) transcription in the promoter-proximal region of genes. The integrator complex provides a quality checkpoint during transcription elongation by driving premature transcription termination of transcripts that are unfavorably configured for transcriptional elongation: the complex terminates transcription by (1) catalyzing dephosphorylation of the C-terminal domain (CTD) of Pol II subunit POLR2A/RPB1 and SUPT5H/SPT5, (2) degrading the exiting nascent RNA transcript via endonuclease activity and (3) promoting the release of Pol II from bound DNA. The integrator complex is also involved in terminating the synthesis of non-coding Pol II transcripts, such as enhancer RNAs (eRNAs), small nuclear RNAs (snRNAs), telomerase RNAs and long non-coding RNAs (lncRNAs). Mediates recruitment of cytoplasmic dynein to the nuclear envelope, probably as component of the integrator complex. The protein is Integrator complex subunit 9 of Homo sapiens (Human).